The primary structure comprises 334 residues: Anthranilate phosphoribosyltransferase (334 aa).

5-phospho-alpha-D-ribose 1-diphosphate is bound by residues glycine 81, glycine 84–aspartate 85, threonine 89, asparagine 91–threonine 94, lysine 109–serine 117, and alanine 121. An anthranilate-binding site is contributed by glycine 81. Serine 93 provides a ligand contact to Mg(2+). Arginine 167 contacts anthranilate. Mg(2+) contacts are provided by aspartate 225 and glutamate 226.

Belongs to the anthranilate phosphoribosyltransferase family. Homodimer. Requires Mg(2+) as cofactor.

It carries out the reaction N-(5-phospho-beta-D-ribosyl)anthranilate + diphosphate = 5-phospho-alpha-D-ribose 1-diphosphate + anthranilate. It functions in the pathway amino-acid biosynthesis; L-tryptophan biosynthesis; L-tryptophan from chorismate: step 2/5. Functionally, catalyzes the transfer of the phosphoribosyl group of 5-phosphorylribose-1-pyrophosphate (PRPP) to anthranilate to yield N-(5'-phosphoribosyl)-anthranilate (PRA). This Actinobacillus pleuropneumoniae serotype 7 (strain AP76) protein is Anthranilate phosphoribosyltransferase.